The primary structure comprises 612 residues: DNA mismatch repair protein MutL (612 aa).

It belongs to the DNA mismatch repair MutL/HexB family.

In terms of biological role, this protein is involved in the repair of mismatches in DNA. It is required for dam-dependent methyl-directed DNA mismatch repair. May act as a 'molecular matchmaker', a protein that promotes the formation of a stable complex between two or more DNA-binding proteins in an ATP-dependent manner without itself being part of a final effector complex. In Afipia carboxidovorans (strain ATCC 49405 / DSM 1227 / KCTC 32145 / OM5) (Oligotropha carboxidovorans), this protein is DNA mismatch repair protein MutL.